Reading from the N-terminus, the 671-residue chain is cGMP-dependent protein kinase 1 (671 aa).

Ser-2 bears the N-acetylserine mark. Residues 2-59 (SELEEDFAKILMLKEERIKELEKRLSEKEEEIQELKRKLHKCQSVLPVPSTHIGPRTT) are a coiled coil. Residues 2-102 (SELEEDFAKI…LIKEAILDND (101 aa)) form a required for dimerization region. The tract at residues 9-44 (AKILMLKEERIKELEKRLSEKEEEIQELKRKLHKCQ) is leucine-zipper. The autoinhibitory domain stretch occupies residues 50-75 (PSTHIGPRTTRAQGISAEPQTYRSFH). Thr-59 is subject to Phosphothreonine; by autocatalysis. The tract at residues 103–220 (FMKNLELSQI…EYMEFLKSVP (118 aa)) is cGMP-binding, high affinity. Residues 167–170 (GELA), 177–178 (RT), Arg-282, 291–294 (GEKA), 301–302 (RT), and Tyr-336 contribute to the 3',5'-cyclic GMP site. Positions 221 to 341 (TFQSLPEEIL…SNKAYEDAEA (121 aa)) are cGMP-binding, low affinity. The 260-residue stretch at 360–619 (FNIIDTLGVG…VKDIQKHKWF (260 aa)) folds into the Protein kinase domain. ATP-binding positions include 366–374 (LGVGGFGRV) and Lys-390. Asp-484 serves as the catalytic Proton acceptor. Position 515 is a phosphothreonine (Thr-515). The AGC-kinase C-terminal domain occupies 620–671 (EGFNWEGLRKGTLTPPIIPSVASPTDTSNFDGFPEDNDEPPPDDNSGWDIDF). The interval 635–671 (PIIPSVASPTDTSNFDGFPEDNDEPPPDDNSGWDIDF) is disordered. A compositionally biased stretch (acidic residues) spans 652–661 (FPEDNDEPPP).

The protein belongs to the protein kinase superfamily. AGC Ser/Thr protein kinase family. cGMP subfamily. As to quaternary structure, isoform alpha: parallel homodimer or heterodimer and also heterotetramer. Interacts directly with PPP1R12A. Non-covalent dimer of dimer of PRKG1-PRKG1 and PPP1R12A-PPP1R12A. This interaction targets PRKG1 to stress fibers to mediate smooth muscle cell relaxation and vasodilation in responses to rises in cGMP. Isoform beta: antiparallel homodimer. Part of cGMP kinase signaling complex at least composed of ACTA2/alpha-actin, CNN1/calponin H1, PLN/phospholamban, PRKG1 and ITPR1. Interacts with IRAG1. Forms a stable complex with ITPR1, IRAG1, and isoform beta of PRKG1. Interacts with TRPC7 (via ankyrin repeat domain). Isoform alpha interacts with RGS2. Interacts with GTF2I. Post-translationally, autophosphorylation increases kinase activity. In terms of processing, 65 kDa monomer is produced by proteolytic cleavage.

It is found in the cytoplasm. It catalyses the reaction L-seryl-[protein] + ATP = O-phospho-L-seryl-[protein] + ADP + H(+). It carries out the reaction L-threonyl-[protein] + ATP = O-phospho-L-threonyl-[protein] + ADP + H(+). Its activity is regulated as follows. In the absence of cGMP, PRKG1 activity is suppressed by autoinhibitory contacts. Its function is as follows. Serine/threonine protein kinase that acts as a key mediator of the nitric oxide (NO)/cGMP signaling pathway. GMP binding activates PRKG1, which phosphorylates serines and threonines on many cellular proteins. Numerous protein targets for PRKG1 phosphorylation are implicated in modulating cellular calcium, but the contribution of each of these targets may vary substantially among cell types. Proteins that are phosphorylated by PRKG1 regulate platelet activation and adhesion, smooth muscle contraction, cardiac function, gene expression, feedback of the NO-signaling pathway, and other processes involved in several aspects of the CNS like axon guidance, hippocampal and cerebellar learning, circadian rhythm and nociception. Smooth muscle relaxation is mediated through lowering of intracellular free calcium, by desensitization of contractile proteins to calcium, and by decrease in the contractile state of smooth muscle or in platelet activation. Regulates intracellular calcium levels via several pathways: phosphorylates IRAG1 and inhibits IP3-induced Ca(2+) release from intracellular stores, phosphorylation of KCNMA1 (BKCa) channels decreases intracellular Ca(2+) levels, which leads to increased opening of this channel. PRKG1 phosphorylates the canonical transient receptor potential channel (TRPC) family which inactivates the associated inward calcium current. Another mode of action of NO/cGMP/PKGI signaling involves PKGI-mediated inactivation of the Ras homolog gene family member A (RhoA). Phosphorylation of RHOA by PRKG1 blocks the action of this protein in myriad processes: regulation of RHOA translocation; decreasing contraction; controlling vesicle trafficking, reduction of myosin light chain phosphorylation resulting in vasorelaxation. Activation of PRKG1 by NO signaling also alters gene expression in a number of tissues. In smooth muscle cells, increased cGMP and PRKG1 activity influence expression of smooth muscle-specific contractile proteins, levels of proteins in the NO/cGMP signaling pathway, down-regulation of the matrix proteins osteopontin and thrombospondin-1 to limit smooth muscle cell migration and phenotype. Regulates vasodilator-stimulated phosphoprotein (VASP) functions in platelets and smooth muscle. The polypeptide is cGMP-dependent protein kinase 1 (PRKG1) (Oryctolagus cuniculus (Rabbit)).